The primary structure comprises 1308 residues: Cadherin-related family member 2 (1308 aa).

Residues 1–20 (MAWLWLLCALLPAFMVSVTA) form the signal peptide. At 21 to 1152 (NSPPSFGVNM…EPDQQKLLTS (1132 aa)) the chain is on the extracellular side. 9 Cadherin domains span residues 33–124 (VTLP…IPVF), 125–241 (LNTE…DPRF), 242–353 (IREF…KPEF), 368–480 (AQVN…RPVF), 481–586 (SQSL…PPVV), 586–695 (VRGS…LPVF), 695–807 (FNQS…PPTL), 809–927 (AASL…APYF), and 929–1051 (PNNQ…RLQF). The chain crosses the membrane as a helical span at residues 1153-1173 (VIIGLVVSLVLVLVILITALV). Topologically, residues 1174 to 1308 (CLRKSYHRKL…TNPGLDTTDL (135 aa)) are cytoplasmic. Residues 1178-1308 (SYHRKLRAMK…TNPGLDTTDL (131 aa)) form a mediates interaction with USH1C and MYO7B and is required for proper localization to microvilli tips and function in microvilli organization region. Ser-1245 carries the post-translational modification Phosphoserine. Residues 1251 to 1308 (VDLDMDSKEFKRKDLPGDPPEPDPEPLTAVLSGRSAGASEQQKKNLSFTNPGLDTTDL) form a disordered region. The span at 1255–1266 (MDSKEFKRKDLP) shows a compositional bias: basic and acidic residues. Residues 1288 to 1308 (ASEQQKKNLSFTNPGLDTTDL) are compositionally biased toward polar residues. A Phosphoserine modification is found at Ser-1297.

In terms of assembly, part of the IMAC/intermicrovillar adhesion complex/intermicrovillar tip-link complex composed of ANKS4B, MYO7B, USH1C, CDHR2 and CDHR5. Interacts with MAST2. Interacts (via cytoplasmic domain) with USH1C and MYO7B; required for proper localization of CDHR2 to microvilli tips and its function in brush border differentiation.

It localises to the apical cell membrane. Its subcellular location is the cell projection. The protein resides in the microvillus membrane. It is found in the cell junction. Intermicrovillar adhesion molecule that forms, via its extracellular domain, calcium-dependent heterophilic complexes with CDHR5 on adjacent microvilli. Thereby, controls the packing of microvilli at the apical membrane of epithelial cells. Through its cytoplasmic domain, interacts with microvillus cytoplasmic proteins to form the intermicrovillar adhesion complex/IMAC. This complex plays a central role in microvilli and epithelial brush border differentiation. May also play a role in cell-cell adhesion and contact inhibition in epithelial cells. In Mus musculus (Mouse), this protein is Cadherin-related family member 2.